We begin with the raw amino-acid sequence, 105 residues long: Large ribosomal subunit protein bL21c (105 aa).

It belongs to the bacterial ribosomal protein bL21 family. Part of the 50S ribosomal subunit.

The protein localises to the plastid. Its subcellular location is the chloroplast. Functionally, this protein binds to 23S rRNA. This Thalassiosira pseudonana (Marine diatom) protein is Large ribosomal subunit protein bL21c.